A 334-amino-acid chain; its full sequence is Protein-methionine-sulfoxide reductase catalytic subunit MsrP (334 aa).

Positions 1-44 (MKKNQFLKESDVTAESVFFMTRRQVLKALGISAAALSLPHAAHA) form a signal peptide, tat-type signal. Residues Asn88, 91 to 92 (YE), Cys146, Thr181, Asn233, Arg238, and 249 to 251 (GIK) contribute to the Mo-molybdopterin site.

The protein belongs to the MsrP family. In terms of assembly, heterodimer of a catalytic subunit (MsrP) and a heme-binding subunit (MsrQ). Mo-molybdopterin is required as a cofactor. Predicted to be exported by the Tat system. The position of the signal peptide cleavage has not been experimentally proven.

It is found in the periplasm. It carries out the reaction L-methionyl-[protein] + a quinone + H2O = L-methionyl-(S)-S-oxide-[protein] + a quinol. It catalyses the reaction L-methionyl-[protein] + a quinone + H2O = L-methionyl-(R)-S-oxide-[protein] + a quinol. In terms of biological role, part of the MsrPQ system that repairs oxidized periplasmic proteins containing methionine sulfoxide residues (Met-O), using respiratory chain electrons. Thus protects these proteins from oxidative-stress damage caused by reactive species of oxygen and chlorine generated by the host defense mechanisms. MsrPQ is essential for the maintenance of envelope integrity under bleach stress, rescuing a wide series of structurally unrelated periplasmic proteins from methionine oxidation, including the primary periplasmic chaperone SurA and the lipoprotein Pal. The catalytic subunit MsrP is non-stereospecific, being able to reduce both (R-) and (S-) diastereoisomers of methionine sulfoxide. In Escherichia coli (strain 55989 / EAEC), this protein is Protein-methionine-sulfoxide reductase catalytic subunit MsrP.